A 350-amino-acid polypeptide reads, in one-letter code: SUMO-activating enzyme subunit 1 (350 aa).

Met-1 is modified (N-acetylmethionine). Val-2 is subject to N-acetylvaline; in SUMO-activating enzyme subunit 1, N-terminally processed. Ser-16 bears the Phosphoserine mark. Residue Lys-202 is modified to N6-acetyllysine.

This sequence belongs to the ubiquitin-activating E1 family. As to quaternary structure, heterodimer of SAE1 and UBA2/SAE2. The heterodimer corresponds to the two domains that are encoded on a single polypeptide chain in ubiquitin-activating enzyme E1. Interacts with UBE2I. In terms of tissue distribution, broadly expressed, with highest levels in testis.

Its subcellular location is the nucleus. It functions in the pathway protein modification; protein sumoylation. The heterodimer acts as an E1 ligase for SUMO1, SUMO2, SUMO3, and probably SUMO4. It mediates ATP-dependent activation of SUMO proteins followed by formation of a thioester bond between a SUMO protein and a conserved active site cysteine residue on UBA2/SAE2. The polypeptide is SUMO-activating enzyme subunit 1 (Sae1) (Mus musculus (Mouse)).